The following is a 1150-amino-acid chain: GPI inositol-deacylase (1150 aa).

The tract at residues 1–43 is disordered; sequence MQGRPNGASGDPNPRNDTSVTIDSDSDNGSRHRIAEVRGSSPS. Asparagine 16 and asparagine 28 each carry an N-linked (GlcNAc...) asparagine glycan. The chain crosses the membrane as a helical span at residues 122–142; the sequence is ICSGLVLFVTVSALLILSIIV. Residue serine 309 is part of the active site. Residues 790–810 traverse the membrane as a helical segment; the sequence is LAMRYRTVFAAFPLLVVSLVL. N-linked (GlcNAc...) asparagine glycosylation is present at asparagine 818. Residues 829 to 849 form a helical membrane-spanning segment; that stretch reads ALDLCIRSSIPLLFLGLTFLA. Asparagine 870 is a glycosylation site (N-linked (GlcNAc...) asparagine). The chain crosses the membrane as a helical span at residues 890–910; that stretch reads AFFWFLVPLFGIISIGTCVIV. The N-linked (GlcNAc...) asparagine glycan is linked to asparagine 942. A run of 5 helical transmembrane segments spans residues 960–980, 1010–1030, 1047–1067, 1079–1099, and 1102–1122; these read VLLL…VACV, SIFI…IVWI, VFSI…TMIP, VLFF…AYLL, and ITNL…GFSL. N-linked (GlcNAc...) asparagine glycans are attached at residues asparagine 1124 and asparagine 1130.

This sequence belongs to the GPI inositol-deacylase family.

It is found in the endoplasmic reticulum membrane. Functionally, involved in inositol deacylation of GPI-anchored proteins which plays important roles in the quality control and ER-associated degradation of GPI-anchored proteins. In Coccidioides immitis (strain RS) (Valley fever fungus), this protein is GPI inositol-deacylase (BST1).